The primary structure comprises 359 residues: Serpentine receptor class epsilon-13 (359 aa).

7 consecutive transmembrane segments (helical) span residues 33 to 53 (YLFVFYIQIALIFIVLFYYLL), 74 to 94 (AIYLPCVLGHVMCLIQKILLI), 111 to 131 (ISLFRAIFCFPGFYCLSAFVA), 150 to 170 (WLVGLILWIIYSIAFISALDF), 180 to 200 (VTIFILLSCLAYLSNYLNFLL), 237 to 257 (LALSIAFFQISGPMCLLIDNL), and 266 to 286 (LNTVVFDTILLLYAIVTPFVI).

It belongs to the nematode receptor-like protein sre family.

The protein resides in the membrane. The chain is Serpentine receptor class epsilon-13 (sre-13) from Caenorhabditis elegans.